The following is a 342-amino-acid chain: Ferredoxin--NADP reductase (342 aa).

FAD contacts are provided by C17, D36, Q44, Y49, V89, F124, D289, and T330.

This sequence belongs to the ferredoxin--NADP reductase type 2 family. In terms of assembly, homodimer. The cofactor is FAD.

It catalyses the reaction 2 reduced [2Fe-2S]-[ferredoxin] + NADP(+) + H(+) = 2 oxidized [2Fe-2S]-[ferredoxin] + NADPH. This chain is Ferredoxin--NADP reductase, found in Bradyrhizobium sp. (strain BTAi1 / ATCC BAA-1182).